Reading from the N-terminus, the 429-residue chain is MSRDPGSGGWEEAPRAAAALCTLYHEAGQRLRRLQDQLAARDALIARLRARLAALEGDAAPSLVDALLEQVARFREQLRRQEGGAAEAQMRQEIERLTERLEEKEREMQQLLSQPQHEREKEVVLLRRSMAEGERARAASDVLCRSLANETHQLRRTLTATAHMCQHLAKCLDERQHAQRNVGERSPDQSEHTDGHTSVQSVIEKLQEENRLLKQKVTHVEDLNAKWQRYNASRDEYVRGLHAQLRGLQIPHEPELMRKEISRLNRQLEEKINDCAEVKQELAASRTARDAALERVQMLEQQILAYKDDFMSERADRERAQSRIQELEEKVASLLHQVSWRQDSREPDAGRIHAGSKTAKYLAADALELMVPGGWRPGTGSQQPEPPAEGGHPGAAQRGQGDLQCPHCLQCFSDEQGEELLRHVAECCQ.

The residue at position 7 (S7) is a Phosphoserine. A coiled-coil region spans residues 29–117; sequence QRLRRLQDQL…MQQLLSQPQH (89 aa). Residues 177–195 show a composition bias toward basic and acidic residues; that stretch reads HAQRNVGERSPDQSEHTDG. The segment at 177–199 is disordered; it reads HAQRNVGERSPDQSEHTDGHTSV. Coiled coils occupy residues 196–226 and 255–340; these read HTSV…LNAK and ELMR…QVSW. Residues 289 to 347 form a ubiquitin-binding domain (UBD) region; sequence RDAALERVQMLEQQILAYKDDFMSERADRERAQSRIQELEEKVASLLHQVSWRQDSREP. The interval 372–400 is disordered; it reads PGGWRPGTGSQQPEPPAEGGHPGAAQRGQ. Low complexity predominate over residues 388–397; it reads AEGGHPGAAQ. The segment at 397 to 429 adopts a CCHC NOA-type zinc-finger fold; sequence QRGQGDLQCPHCLQCFSDEQGEELLRHVAECCQ. Zn(2+)-binding residues include C405, C408, H423, and C427.

As to quaternary structure, interacts with STK11/LKB1, TNFAIP3, IKBKG, NFKB1, MAP3K8, TEK, RIPK1, CHUK, IKBKB and SMARCD1. Interacts with polyubiquitin. (Microbial infection) Interacts with severe fever with thrombocytopenia syndrome virus (SFTSV) NSs; this interaction promotes TPL2 complex formation and signaling activity leading to IL-10 production. Post-translationally, in vitro phosphorylated by CHUK. In terms of processing, ubiquitinated; undergoes 'Lys-48'-linked polyubiquitination probably leading to constitutive proteasomal degradation which can be impaired by IKK-A/CHUK or IKBKB probably involving deubiquitination. Deubiquitinated by USP35; leading to stabilization and inhibition of TNFalpha-induced NF-kappa-B activation. Ubiquitously expressed in all tissues examined.

The protein resides in the cytoplasm. The protein localises to the nucleus. Its function is as follows. Inhibits NF-kappa-B activation by blocking the interaction of RIPK1 with its downstream effector NEMO/IKBKG. Forms a ternary complex with NFKB1 and MAP3K8 but appears to function upstream of MAP3K8 in the TLR4 signaling pathway that regulates MAP3K8 activation. Involved in activation of the MEK/ERK signaling pathway during innate immune response; this function seems to be stimulus- and cell type specific. Required for stability of MAP3K8. Involved in regulation of apoptosis in endothelial cells; promotes TEK agonist-stimulated endothelial survival. May act as transcriptional coactivator when translocated to the nucleus. Enhances CHUK-mediated NF-kappa-B activation involving NF-kappa-B p50-p65 and p50-c-Rel complexes. This chain is TNFAIP3-interacting protein 2, found in Homo sapiens (Human).